The chain runs to 66 residues: UPF0337 protein BT9727_0908 (66 aa).

The disordered stretch occupies residues 1–22; it reads MSENGLKEQITGKVEKTKGQVK. The segment covering 13-22 has biased composition (basic and acidic residues); sequence KVEKTKGQVK.

This sequence belongs to the UPF0337 (CsbD) family.

This chain is UPF0337 protein BT9727_0908, found in Bacillus thuringiensis subsp. konkukian (strain 97-27).